Here is an 83-residue protein sequence, read N- to C-terminus: Protein L83L (83 aa).

Belongs to the asfivirus L83L family. As to quaternary structure, interacts with host IL1B.

It is found in the host cytoplasm. Functionally, may subvert the host innate immune response by interacting with host IL1B and interfering with its function. The chain is Protein L83L from Ornithodoros (relapsing fever ticks).